Consider the following 742-residue polypeptide: Envelope glycoprotein H (742 aa).

Residues 1 to 29 (MRPGLPSYLIVLAVCLLSHLLSSRYGAEA) form the signal peptide. At 30–719 (ISEPLDKAFH…VVDATDSRLL (690 aa)) the chain is on the virion surface side. N55, N62, N67, and N192 each carry an N-linked (GlcNAc...) asparagine; by host glycan. The tract at residues 217–280 (YLIDELRYVK…QTEKHELLVL (64 aa)) is interaction with gL. N641 and N700 each carry an N-linked (GlcNAc...) asparagine; by host glycan. A helical transmembrane segment spans residues 720–740 (MMSVYALSAIIGIYLLYRMLK). The Intravirion portion of the chain corresponds to 741–742 (TC).

This sequence belongs to the herpesviridae glycoprotein H family. As to quaternary structure, interacts with glycoprotein L (gL); this interaction is necessary for the correct processing and cell surface expression of gH. The heterodimer gH/gL seems to interact with gB trimers during fusion. Forms the envelope pentamer complex (PC) composed of gH, gL, UL128, UL130, and UL131A. The pentamer interacts with host NRP2. Forms the envelope trimer complex composed of gH, gL, and gO. The trimer interacts with host PDGFRA. The trimer also interacts with host EPHA2. N-glycosylated, O-glycosylated, and sialylated.

Its subcellular location is the virion membrane. The protein localises to the host cell membrane. The protein resides in the host endosome membrane. Its function is as follows. The heterodimer glycoprotein H-glycoprotein L is required for the fusion of viral and plasma membranes leading to virus entry into the host cell. Following initial binding to host receptor, membrane fusion is mediated by the fusion machinery composed of gB and the heterodimer gH/gL. May also be involved in the fusion between the virion envelope and the outer nuclear membrane during virion morphogenesis. In human cytomegalovirus, forms two distincts complexes to mediate viral entry, a trimer and a pentamer at the surface of the virion envelope. The gH-gL-gO trimer is required for infection in fibroblasts by interacting with host PDGFRA, and in glioblastoma cells by interacting with host EPHA2. The gH-gL-UL128-UL130-UL131A pentamer is essential for viral entry in epithelial, endothelial and myeloid cells via interaction with host NRP2. The sequence is that of Envelope glycoprotein H from Human cytomegalovirus (strain Towne) (HHV-5).